We begin with the raw amino-acid sequence, 105 residues long: Large ribosomal subunit protein eL36 (105 aa).

The protein belongs to the eukaryotic ribosomal protein eL36 family. In terms of assembly, component of the large ribosomal subunit.

The protein resides in the cytoplasm. It is found in the cytosol. In terms of biological role, component of the large ribosomal subunit. The ribosome is a large ribonucleoprotein complex responsible for the synthesis of proteins in the cell. The chain is Large ribosomal subunit protein eL36 (rpl36) from Danio rerio (Zebrafish).